Reading from the N-terminus, the 209-residue chain is Probable calcium-binding protein CML36 (209 aa).

The segment at 22-59 (SKSPTAFSFGSASSSSGQDCKNSGGDGGGGSVTPTSIL) is disordered. The span at 27-38 (AFSFGSASSSSG) shows a compositional bias: low complexity. EF-hand domains are found at residues 66-101 (YSYV…LGPD), 103-138 (LTEE…LDPA), 139-174 (RDST…IGDE), and 176-209 (CTLD…DLQR). 4 residues coordinate Ca(2+): Asp-79, Asp-81, Asp-83, and Asp-90. Asp-152, Asp-154, Asp-156, Glu-163, Asp-189, Asp-191, Asp-193, and Glu-200 together coordinate Ca(2+).

Potential calcium sensor. The sequence is that of Probable calcium-binding protein CML36 (CML36) from Arabidopsis thaliana (Mouse-ear cress).